The primary structure comprises 240 residues: Enolase-phosphatase E1 (240 aa).

Asp-9 and Glu-11 together coordinate Mg(2+). Substrate contacts are provided by residues 129-130 (SS) and Lys-168. Position 195 (Asp-195) interacts with Mg(2+).

This sequence belongs to the HAD-like hydrolase superfamily. MasA/MtnC family. As to quaternary structure, monomer. Requires Mg(2+) as cofactor.

Its subcellular location is the cytoplasm. The protein resides in the nucleus. It catalyses the reaction 5-methylsulfanyl-2,3-dioxopentyl phosphate + H2O = 1,2-dihydroxy-5-(methylsulfanyl)pent-1-en-3-one + phosphate. It participates in amino-acid biosynthesis; L-methionine biosynthesis via salvage pathway; L-methionine from S-methyl-5-thio-alpha-D-ribose 1-phosphate: step 3/6. It functions in the pathway amino-acid biosynthesis; L-methionine biosynthesis via salvage pathway; L-methionine from S-methyl-5-thio-alpha-D-ribose 1-phosphate: step 4/6. Bifunctional enzyme that catalyzes the enolization of 2,3-diketo-5-methylthiopentyl-1-phosphate (DK-MTP-1-P) into the intermediate 2-hydroxy-3-keto-5-methylthiopentenyl-1-phosphate (HK-MTPenyl-1-P), which is then dephosphorylated to form the acireductone 1,2-dihydroxy-3-keto-5-methylthiopentene (DHK-MTPene). The sequence is that of Enolase-phosphatase E1 from Candida tropicalis (strain ATCC MYA-3404 / T1) (Yeast).